Here is a 293-residue protein sequence, read N- to C-terminus: Putative ABC transporter ATP-binding protein AF_0731 (293 aa).

An ABC transporter domain is found at 2-236 (IEAVDLHFCY…RKLGIRSFSL (235 aa)). 34–41 (GRNGAGKT) contributes to the ATP binding site.

Belongs to the ABC transporter superfamily.

The protein localises to the cell membrane. Its function is as follows. Probably part of an ABC transporter complex. Responsible for energy coupling to the transport system. In Archaeoglobus fulgidus (strain ATCC 49558 / DSM 4304 / JCM 9628 / NBRC 100126 / VC-16), this protein is Putative ABC transporter ATP-binding protein AF_0731.